Here is a 365-residue protein sequence, read N- to C-terminus: MHLNSNPNSYICDAYQHADLLWSLSPHVLTKAVQPQVTLLPTVNGSNPRYDGVDGHWPESPERSPCVAGIIPVIYYSVLLSLGLPVALARLAARTRKPSYHYLLALTASDIVTQVIIVFVGFLLQGAVLARQVPQAVVRTANILEFAANHASVWIAVLFTVDRYNALCRPLRHRATSSPGRTHRAIAAVIGVTLLTGIPFYWWLDVWRDADPPSTMDKLLKWAHCLIVYFIPCNVFLVTNSAIILRLRKRGQRGLRPLVSKSTAILLGVTSLFALLWAPRIIVMLYHLYVAPVHRDWRVHLALDIANMLAMLNTEVNFGLYCFISKTFRATVRQVICDVHMACALKSQPKQTVVELMLKSVGTEL.

At Met-1–Cys-66 the chain is on the extracellular side. Asn-44 carries N-linked (GlcNAc...) asparagine glycosylation. The chain crosses the membrane as a helical span at residues Val-67–Ala-87. Topologically, residues Leu-88–Tyr-102 are cytoplasmic. A helical membrane pass occupies residues Leu-103–Leu-123. Over Leu-124–Thr-140 the chain is Extracellular. Residues Ala-141 to Val-161 form a helical membrane-spanning segment. Over Asp-162–Ala-185 the chain is Cytoplasmic. The chain crosses the membrane as a helical span at residues Ile-186–Val-206. Residues Trp-207–His-224 lie on the Extracellular side of the membrane. Residues Cys-225–Leu-245 traverse the membrane as a helical segment. Residues Arg-246–Ala-264 lie on the Cytoplasmic side of the membrane. Residues Ile-265 to Leu-285 traverse the membrane as a helical segment. Residues Tyr-286 to Asp-304 lie on the Extracellular side of the membrane. Residues Ile-305–Ser-325 traverse the membrane as a helical segment. Residues Lys-326–Leu-365 are Cytoplasmic-facing.

Belongs to the G-protein coupled receptor 1 family.

The protein resides in the cell membrane. Orphan receptor. This Mus musculus (Mouse) protein is Probable G-protein coupled receptor 142 (Gpr142).